A 442-amino-acid polypeptide reads, in one-letter code: D-serine dehydratase (442 aa).

At Lys118 the chain carries N6-(pyridoxal phosphate)lysine.

This sequence belongs to the serine/threonine dehydratase family. DsdA subfamily. As to quaternary structure, monomer. It depends on pyridoxal 5'-phosphate as a cofactor.

It carries out the reaction D-serine = pyruvate + NH4(+). This is D-serine dehydratase from Escherichia coli (strain K12 / MC4100 / BW2952).